Here is a 583-residue protein sequence, read N- to C-terminus: MYRSHNCGELNATHINKEVTLAGWVQKSRDKGFMNWVDLRDRYGITQLMFDESRSDKTVFELAKTLGREFVIQVKGTVIEREAKNKNISTGEIEILVTQMTILNSSLTPPFTIEDETDGGEDIRMKYRYLDIRRNPVKNSLLFRHKVAMEVRKYLSDLDFCEVETPYLIKSTPEGARDFVVPSRMNEGQFYALPQSPQTFKQLLMVGGMDKYFQIVKCFRDEDLRADRQPEFTQIDCEMAFVEQEDILNIFEGLTRHLLKELKGIEVEKFPRMTYNHAMKTYGNDKPDIRFGMEFGELNEYAKHKDFPVFNAAELVVAIAVPGVGEYSRKEIDALIEWVKRPQVGASGMVYVKCNEDGTYKSSVDKFYDQGDLSHWAKTTGAKAGDMIFVLSGPADKTRAQLSALRMELATRLGLRNPAEFAPLWVVDFPLLEFDEESGRYHAMHHPFTSPKPEDMHLLETDPKSVRANAYDMVLNGNEIGGGSIRIHDKNTQALMFKYLGFTEEEAKNQFGFLMDAFQFGAPPHGGLAFGLDRLVAILGGQETIRDFIAFPKNNSGRDVMIDAPSIIDDSQLKELHIQLDLK.

Glu174 lines the L-aspartate pocket. Positions 198-201 (QTFK) are aspartate. Arg220 is an L-aspartate binding site. ATP contacts are provided by residues 220–222 (RDE) and Gln229. His445 contributes to the L-aspartate binding site. Glu479 serves as a coordination point for ATP. Residue Arg486 participates in L-aspartate binding. An ATP-binding site is contributed by 531–534 (GLDR).

This sequence belongs to the class-II aminoacyl-tRNA synthetase family. Type 1 subfamily. Homodimer.

The protein resides in the cytoplasm. The catalysed reaction is tRNA(Asp) + L-aspartate + ATP = L-aspartyl-tRNA(Asp) + AMP + diphosphate. Catalyzes the attachment of L-aspartate to tRNA(Asp) in a two-step reaction: L-aspartate is first activated by ATP to form Asp-AMP and then transferred to the acceptor end of tRNA(Asp). The protein is Aspartate--tRNA ligase of Flavobacterium psychrophilum (strain ATCC 49511 / DSM 21280 / CIP 103535 / JIP02/86).